We begin with the raw amino-acid sequence, 362 residues long: Type II methyltransferase M.MamI (362 aa).

It belongs to the N(4)/N(6)-methyltransferase family.

The catalysed reaction is a 2'-deoxyadenosine in DNA + S-adenosyl-L-methionine = an N(6)-methyl-2'-deoxyadenosine in DNA + S-adenosyl-L-homocysteine + H(+). Functionally, a gamma subtype methylase that recognizes the double-stranded sequence 5'-GATNNNNATC-3', methylates A-? on both strands, and protects the DNA from cleavage by the MamI endonuclease. The protein is Type II methyltransferase M.MamI of Microbacterium ammoniaphilum.